Consider the following 101-residue polypeptide: Guanyl-specific ribonuclease St (101 aa).

A disulfide bridge connects residues Cys4 and Cys54. Residue Glu61 is the Proton acceptor of the active site. His91 serves as the catalytic Proton donor.

The protein belongs to the ribonuclease N1/T1 family.

The enzyme catalyses [RNA] containing guanosine + H2O = an [RNA fragment]-3'-guanosine-3'-phosphate + a 5'-hydroxy-ribonucleotide-3'-[RNA fragment].. The polypeptide is Guanyl-specific ribonuclease St (Saccharopolyspora erythraea (Streptomyces erythraeus)).